Reading from the N-terminus, the 305-residue chain is Ribonuclease BN (305 aa).

His64, His66, Asp68, His69, His141, Asp212, and His270 together coordinate Zn(2+). The active-site Proton acceptor is the Asp68.

The protein belongs to the RNase Z family. RNase BN subfamily. Homodimer. Zn(2+) serves as cofactor.

Its function is as follows. Zinc phosphodiesterase, which has both exoribonuclease and endoribonuclease activities. This chain is Ribonuclease BN, found in Escherichia coli O127:H6 (strain E2348/69 / EPEC).